The chain runs to 75 residues: MNQHNSLDSSDITYKTEELLEATTNRYKITVQVANRAKRRKYEDVDIIDDPQVKPVIRAILEMVDEITQPEIISD.

It belongs to the RNA polymerase subunit omega family.

It is found in the plastid. The protein resides in the chloroplast. The enzyme catalyses RNA(n) + a ribonucleoside 5'-triphosphate = RNA(n+1) + diphosphate. Its function is as follows. May be involved in RNA polymerase activity. The polypeptide is Putative DNA-directed RNA polymerase subunit omega (Pyropia yezoensis (Susabi-nori)).